Consider the following 419-residue polypeptide: Queuine tRNA-ribosyltransferase accessory subunit 2 (419 aa).

Zn(2+)-binding residues include Cys326, Cys328, Cys331, and His357.

It belongs to the queuine tRNA-ribosyltransferase family. QTRT2 subfamily. Heterodimer of a catalytic subunit and an accessory subunit. Zn(2+) serves as cofactor.

Its subcellular location is the cytoplasm. Non-catalytic subunit of the queuine tRNA-ribosyltransferase (TGT) that catalyzes the base-exchange of a guanine (G) residue with queuine (Q) at position 34 (anticodon wobble position) in tRNAs with GU(N) anticodons (tRNA-Asp, -Asn, -His and -Tyr), resulting in the hypermodified nucleoside queuosine (7-(((4,5-cis-dihydroxy-2-cyclopenten-1-yl)amino)methyl)-7-deazaguanosine). The protein is Queuine tRNA-ribosyltransferase accessory subunit 2 of Drosophila grimshawi (Hawaiian fruit fly).